Reading from the N-terminus, the 169-residue chain is Ribosome maturation factor RimM (169 aa).

Positions 97-169 constitute a PRC barrel domain; that stretch reads PGEYYWYQLI…VITVDWDMNF (73 aa).

The protein belongs to the RimM family. As to quaternary structure, binds ribosomal protein uS19.

Its subcellular location is the cytoplasm. In terms of biological role, an accessory protein needed during the final step in the assembly of 30S ribosomal subunit, possibly for assembly of the head region. Essential for efficient processing of 16S rRNA. May be needed both before and after RbfA during the maturation of 16S rRNA. It has affinity for free ribosomal 30S subunits but not for 70S ribosomes. This is Ribosome maturation factor RimM from Legionella pneumophila (strain Paris).